Consider the following 419-residue polypeptide: D-galactonate dehydratase family member SEN1436 (419 aa).

2 residues coordinate substrate: Gln-45 and His-129. The Proton donor/acceptor role is filled by Tyr-160. Mg(2+) is bound at residue Asp-225. Residue His-227 is the Proton donor/acceptor of the active site. Positions 251 and 277 each coordinate Mg(2+). 5 residues coordinate substrate: Glu-277, Arg-298, His-327, Asp-331, and Glu-354.

It belongs to the mandelate racemase/muconate lactonizing enzyme family. GalD subfamily. As to quaternary structure, homotetramer. Mg(2+) serves as cofactor.

The catalysed reaction is D-gluconate = 2-dehydro-3-deoxy-D-gluconate + H2O. Functionally, has low D-gluconate dehydratase activity (in vitro), suggesting that it has no significant role in D-gluconate degradation in vivo. Has no detectable activity with a panel of 70 other acid sugars (in vitro). In Salmonella enteritidis PT4 (strain P125109), this protein is D-galactonate dehydratase family member SEN1436.